A 243-amino-acid chain; its full sequence is Carboxy-S-adenosyl-L-methionine synthase (243 aa).

Residues tyrosine 40, 65 to 67 (GCS), 90 to 91 (DN), 118 to 119 (DI), asparagine 133, and arginine 200 contribute to the S-adenosyl-L-methionine site.

This sequence belongs to the class I-like SAM-binding methyltransferase superfamily. Cx-SAM synthase family. As to quaternary structure, homodimer.

The enzyme catalyses prephenate + S-adenosyl-L-methionine = carboxy-S-adenosyl-L-methionine + 3-phenylpyruvate + H2O. Catalyzes the conversion of S-adenosyl-L-methionine (SAM) to carboxy-S-adenosyl-L-methionine (Cx-SAM). The sequence is that of Carboxy-S-adenosyl-L-methionine synthase from Shewanella amazonensis (strain ATCC BAA-1098 / SB2B).